Reading from the N-terminus, the 65-residue chain is Conotoxin Cal16.1 (65 aa).

A signal peptide spans 1–19 (MRCLSIFVLLVLLVSFAVA). A propeptide spanning residues 20-48 (ELDVEGEIVKQLLTRGTLKDADFWKRLEM) is cleaved from the precursor. Q49 is subject to Pyrrolidone carboxylic acid. 2 disulfides stabilise this stretch: C51-C60 and C53-C61. E63 is subject to Glutamic acid 1-amide.

Expressed by the venom duct.

It localises to the secreted. Probable neurotoxin with unknown target. Possibly targets ion channels. The sequence is that of Conotoxin Cal16.1 from Californiconus californicus (California cone).